The chain runs to 763 residues: Phosphoglycerol transferase I (763 aa).

Transmembrane regions (helical) follow at residues 1-21 (MSEL…AWKA), 26-46 (WWFA…ITLY), 77-97 (ILPG…LGWV), and 108-128 (VGYS…SPAF).

This sequence belongs to the OpgB family.

It is found in the cell inner membrane. It catalyses the reaction a phosphatidylglycerol + a membrane-derived-oligosaccharide D-glucose = a 1,2-diacyl-sn-glycerol + a membrane-derived-oligosaccharide 6-(glycerophospho)-D-glucose.. It participates in glycan metabolism; osmoregulated periplasmic glucan (OPG) biosynthesis. Its function is as follows. Transfers a phosphoglycerol residue from phosphatidylglycerol to the membrane-bound nascent glucan backbones. The sequence is that of Phosphoglycerol transferase I from Salmonella dublin (strain CT_02021853).